Reading from the N-terminus, the 95-residue chain is Osteocalcin (95 aa).

Positions 1–23 are cleaved as a signal peptide; that stretch reads MRTIFLLTLLTLAALCLSDLTDA. The propeptide occupies 24-49; that stretch reads KPSGPESDKAFMSKQEGNKVVNRLRR. The Gla domain maps to 46-92; it reads RLRRYLGASVPSPDPLEPTREQCELNPACDELSDQYGLKTAYKRIYG. Ca(2+)-binding residues include glutamate 62, glutamate 66, glutamate 69, and aspartate 75. A 4-carboxyglutamate mark is found at glutamate 62, glutamate 66, and glutamate 69. A disulfide bridge connects residues cysteine 68 and cysteine 74.

Belongs to the osteocalcin/matrix Gla protein family. Post-translationally, gamma-carboxyglutamate residues are formed by vitamin K dependent carboxylation by GGCX. These residues are essential for the binding of calcium. Carboxylated in a Ptprv/Esp-dependent process. Decarboxylation promotes the hormone activity. Bone.

Its subcellular location is the secreted. Its function is as follows. The carboxylated form is one of the main organic components of the bone matrix, which constitutes 1-2% of the total bone protein: it acts as a negative regulator of bone formation and is required to limit bone formation without impairing bone resorption or mineralization. The carboxylated form binds strongly to apatite and calcium. Functionally, the uncarboxylated form acts as a hormone secreted by osteoblasts, which regulates different cellular processes, such as energy metabolism, male fertility and brain development. Regulates of energy metabolism by acting as a hormone favoring pancreatic beta-cell proliferation, insulin secretion and sensitivity and energy expenditure. Uncarboxylated osteocalcin hormone also promotes testosterone production in the testes: acts as a ligand for G protein-coupled receptor GPRC6A at the surface of Leydig cells, initiating a signaling response that promotes the expression of enzymes required for testosterone synthesis in a CREB-dependent manner. Also acts as a regulator of brain development: osteocalcin hormone crosses the blood-brain barrier and acts as a ligand for GPR158 on neurons, initiating a signaling response that prevents neuronal apoptosis in the hippocampus, favors the synthesis of all monoamine neurotransmitters and inhibits that of gamma-aminobutyric acid (GABA). Osteocalcin also crosses the placenta during pregnancy and maternal osteocalcin is required for fetal brain development. The polypeptide is Osteocalcin (Mus musculus (Mouse)).